Here is a 411-residue protein sequence, read N- to C-terminus: UPF0754 membrane protein Npun_R4433 (411 aa).

Transmembrane regions (helical) follow at residues Trp3–Thr23 and Ile387–Val407.

The protein belongs to the UPF0754 family.

The protein resides in the cell inner membrane. The polypeptide is UPF0754 membrane protein Npun_R4433 (Nostoc punctiforme (strain ATCC 29133 / PCC 73102)).